Here is a 622-residue protein sequence, read N- to C-terminus: Probable methionine--tRNA ligase, mitochondrial (622 aa).

Residues Pro-67–His-79 carry the 'HIGH' region motif. The short motif at Lys-366–Ser-370 is the 'KMSKS' region element. Lys-369 serves as a coordination point for ATP. The segment at Leu-592–Ala-622 is disordered. Positions Gly-610–Ala-622 are enriched in low complexity.

It belongs to the class-I aminoacyl-tRNA synthetase family.

The protein localises to the mitochondrion matrix. It catalyses the reaction tRNA(Met) + L-methionine + ATP = L-methionyl-tRNA(Met) + AMP + diphosphate. In Neurospora crassa (strain ATCC 24698 / 74-OR23-1A / CBS 708.71 / DSM 1257 / FGSC 987), this protein is Probable methionine--tRNA ligase, mitochondrial.